The following is a 1078-amino-acid chain: Carbamoyl phosphate synthase large chain (1078 aa).

Positions 1–401 (MARQPLVSSV…ALQKAVRGLE (401 aa)) are carboxyphosphate synthetic domain. Residues arginine 129, arginine 169, glycine 175, glycine 176, arginine 208, leucine 210, glutamate 215, glycine 241, valine 242, histidine 243, glutamine 284, and glutamate 298 each contribute to the ATP site. The 195-residue stretch at 133–327 (KELLLEIGEP…IARIAAKLAI (195 aa)) folds into the ATP-grasp 1 domain. Residues glutamine 284, glutamate 298, and asparagine 300 each contribute to the Mg(2+) site. The Mn(2+) site is built by glutamine 284, glutamate 298, and asparagine 300. Residues 402-546 (TDQTDLTWED…YATYEDENEA (145 aa)) form an oligomerization domain region. The tract at residues 547-935 (PPLDSPKAVV…ALAKAFLAAG (389 aa)) is carbamoyl phosphate synthetic domain. In terms of domain architecture, ATP-grasp 2 spans 677-867 (ERFLHELGIP…MVDVATQILL (191 aa)). Residues arginine 713, lysine 752, leucine 754, glutamate 758, glycine 783, valine 784, histidine 785, serine 786, glutamine 826, and glutamate 838 each contribute to the ATP site. Mg(2+) is bound by residues glutamine 826, glutamate 838, and asparagine 840. Mn(2+) is bound by residues glutamine 826, glutamate 838, and asparagine 840. The region spanning 936 to 1078 (LAIERGAPVL…AYRTREAVLA (143 aa)) is the MGS-like domain. The tract at residues 936–1078 (LAIERGAPVL…AYRTREAVLA (143 aa)) is allosteric domain.

This sequence belongs to the CarB family. In terms of assembly, composed of two chains; the small (or glutamine) chain promotes the hydrolysis of glutamine to ammonia, which is used by the large (or ammonia) chain to synthesize carbamoyl phosphate. Tetramer of heterodimers (alpha,beta)4. Mg(2+) is required as a cofactor. Mn(2+) serves as cofactor.

It carries out the reaction hydrogencarbonate + L-glutamine + 2 ATP + H2O = carbamoyl phosphate + L-glutamate + 2 ADP + phosphate + 2 H(+). It catalyses the reaction hydrogencarbonate + NH4(+) + 2 ATP = carbamoyl phosphate + 2 ADP + phosphate + 2 H(+). Its pathway is amino-acid biosynthesis; L-arginine biosynthesis; carbamoyl phosphate from bicarbonate: step 1/1. It participates in pyrimidine metabolism; UMP biosynthesis via de novo pathway; (S)-dihydroorotate from bicarbonate: step 1/3. Functionally, large subunit of the glutamine-dependent carbamoyl phosphate synthetase (CPSase). CPSase catalyzes the formation of carbamoyl phosphate from the ammonia moiety of glutamine, carbonate, and phosphate donated by ATP, constituting the first step of 2 biosynthetic pathways, one leading to arginine and/or urea and the other to pyrimidine nucleotides. The large subunit (synthetase) binds the substrates ammonia (free or transferred from glutamine from the small subunit), hydrogencarbonate and ATP and carries out an ATP-coupled ligase reaction, activating hydrogencarbonate by forming carboxy phosphate which reacts with ammonia to form carbamoyl phosphate. The polypeptide is Carbamoyl phosphate synthase large chain (Thermomicrobium roseum (strain ATCC 27502 / DSM 5159 / P-2)).